The primary structure comprises 500 residues: Glycerol kinase (500 aa).

Position 13 (T13) interacts with ADP. The ATP site is built by T13, T14, and S15. A sn-glycerol 3-phosphate-binding site is contributed by T13. R17 is a binding site for ADP. The sn-glycerol 3-phosphate site is built by R83, E84, Y135, and D244. Positions 83, 84, 135, 244, and 245 each coordinate glycerol. Positions 266 and 309 each coordinate ADP. T266, G309, Q313, and G410 together coordinate ATP. The ADP site is built by G410 and N414.

The protein belongs to the FGGY kinase family.

It carries out the reaction glycerol + ATP = sn-glycerol 3-phosphate + ADP + H(+). The protein operates within polyol metabolism; glycerol degradation via glycerol kinase pathway; sn-glycerol 3-phosphate from glycerol: step 1/1. With respect to regulation, inhibited by fructose 1,6-bisphosphate (FBP). In terms of biological role, key enzyme in the regulation of glycerol uptake and metabolism. Catalyzes the phosphorylation of glycerol to yield sn-glycerol 3-phosphate. In Burkholderia multivorans (strain ATCC 17616 / 249), this protein is Glycerol kinase.